Consider the following 290-residue polypeptide: 4-hydroxy-tetrahydrodipicolinate synthase (290 aa).

Threonine 44 contacts pyruvate. Catalysis depends on tyrosine 132, which acts as the Proton donor/acceptor. Catalysis depends on lysine 160, which acts as the Schiff-base intermediate with substrate. Residue isoleucine 202 coordinates pyruvate.

Belongs to the DapA family. As to quaternary structure, homotetramer; dimer of dimers.

It is found in the cytoplasm. The catalysed reaction is L-aspartate 4-semialdehyde + pyruvate = (2S,4S)-4-hydroxy-2,3,4,5-tetrahydrodipicolinate + H2O + H(+). It functions in the pathway amino-acid biosynthesis; L-lysine biosynthesis via DAP pathway; (S)-tetrahydrodipicolinate from L-aspartate: step 3/4. Functionally, catalyzes the condensation of (S)-aspartate-beta-semialdehyde [(S)-ASA] and pyruvate to 4-hydroxy-tetrahydrodipicolinate (HTPA). In Geobacter sp. (strain M21), this protein is 4-hydroxy-tetrahydrodipicolinate synthase.